The following is a 503-amino-acid chain: Maturase K (503 aa).

It belongs to the intron maturase 2 family. MatK subfamily.

It is found in the plastid. The protein resides in the chloroplast. In terms of biological role, usually encoded in the trnK tRNA gene intron. Probably assists in splicing its own and other chloroplast group II introns. This Diospyros virginiana (American persimmon) protein is Maturase K.